Reading from the N-terminus, the 571-residue chain is MSGDILVGEYLFKRLEQLGVKSILGVPGDFNLALLDLIEKVGDEKFRWVGNTNELNGAYAADGYARVNGLSAIVTTFGVGELSAINGVAGSYAEHVPVVHIVGMPSTKVQDTGALLHHTLGDGDFRTFMDMFKKVSAYSIMIDNGNDAAEKIDEALSICYKKARPVYIGIPSDAGYFKASSSNLGKRLKLEEDTNDPAVEQEVINHISEMVVNAKKPVILIDACAVRHRVVPEVHELIKLTHFPTYVTPMGKSAIDETSQFFDGVYVGSISDPEVKDRIESTDLLLSIGALKSDFNTGSFSYHLSQKNAVEFHSDHMRIRYALYPNVAMKYILRKLLKVLDASMCHSKAAPTIGYNIKPKHAEGYSSNEITHCWFWPKFSEFLKPRDVLITETGTANFGVLDCRFPKDVTAISQVLWGSIGYSVGAMFGAVLAVHDSKEPDRRTILVVGDGSLQLTITEISTCIRHNLKPIIFIINNDGYTIERLIHGLHASYNEINTKWGYQQIPKFFGAAENHFRTYCVKTPTDVEKLFSDKEFANADVIQVVELVMPMLDAPRVLVEQAKLTSKINKQ.

Aspartate 29 and histidine 118 together coordinate pyruvate. Thiamine diphosphate is bound by residues threonine 395 and 418-420; that span reads GSI. Residue aspartate 450 participates in Mg(2+) binding. Thiamine diphosphate is bound by residues 451–452 and 477–482; these read GS and NDGYTI. The Mg(2+) site is built by asparagine 477 and glycine 479. Residue glutamate 483 coordinates pyruvate.

The protein belongs to the TPP enzyme family. Homotetramer. It depends on Mg(2+) as a cofactor. The cofactor is thiamine diphosphate.

It carries out the reaction a 2-oxocarboxylate + H(+) = an aldehyde + CO2. The enzyme catalyses pyruvate + H(+) = acetaldehyde + CO2. The sequence is that of Putative pyruvate decarboxylase C13A11.06 from Schizosaccharomyces pombe (strain 972 / ATCC 24843) (Fission yeast).